A 637-amino-acid polypeptide reads, in one-letter code: Threonine--tRNA ligase (637 aa).

In terms of domain architecture, TGS spans 1-61 (MLNITLPDCS…VEDSAVQIIT (61 aa)). Positions 242–533 (DHRKLGKQLD…LIENHAGSFP (292 aa)) are catalytic. Zn(2+) is bound by residues C333, H384, and H510.

This sequence belongs to the class-II aminoacyl-tRNA synthetase family. In terms of assembly, homodimer. Requires Zn(2+) as cofactor.

Its subcellular location is the cytoplasm. It carries out the reaction tRNA(Thr) + L-threonine + ATP = L-threonyl-tRNA(Thr) + AMP + diphosphate + H(+). In terms of biological role, catalyzes the attachment of threonine to tRNA(Thr) in a two-step reaction: L-threonine is first activated by ATP to form Thr-AMP and then transferred to the acceptor end of tRNA(Thr). Also edits incorrectly charged L-seryl-tRNA(Thr). The sequence is that of Threonine--tRNA ligase from Neisseria gonorrhoeae (strain ATCC 700825 / FA 1090).